The following is a 502-amino-acid chain: Zinc finger C3HC-type protein 1 (502 aa).

Residue Ala2 is modified to N-acetylalanine. At Ser24 the chain carries Phosphoserine. Thr28 carries the post-translational modification Phosphothreonine. A disordered region spans residues Leu35–Ser74. Over residues Gln50 to Ser72 the composition is skewed to polar residues. Phosphoserine is present on residues Ser58 and Ser62. Residue Thr84 is modified to Phosphothreonine. The C3HC-type zinc-finger motif lies at Cys102 to Cys156. Residues Ser302–Ser423 are disordered. Residues Ser321 and Ser329 each carry the phosphoserine modification. Position 333 is a phosphothreonine (Thr333). A phosphoserine mark is found at Ser338, Ser344, Ser354, Ser359, and Ser370. Residues Arg351 to Pro360 are compositionally biased toward polar residues. Low complexity predominate over residues Pro371 to Arg380. Position 381 is a phosphoserine (Ser381). Thr384 carries the post-translational modification Phosphothreonine. A Phosphoserine modification is found at Ser395. The Nuclear localization signal motif lies at Pro396–Arg402. Phosphoserine occurs at positions 407 and 483. Positions Ser407 to Thr422 are enriched in low complexity.

Interacts with TPR; this interaction mediates ZC3HC1 nuclear envelopes (NE)-association but also required for proper positioning of a substantial amount of TPR at the nuclear basket (NB). Post-translationally, phosphorylated. May also be weakly phosphorylated on Tyr residues.

Its subcellular location is the nucleus. The protein localises to the nucleus envelope. Functionally, required for proper positioning of a substantial amount of TPR at the nuclear basket (NB) through interaction with TPR. The sequence is that of Zinc finger C3HC-type protein 1 (ZC3HC1) from Pongo abelii (Sumatran orangutan).